We begin with the raw amino-acid sequence, 278 residues long: Probable cytochrome c oxidase subunit 3 (278 aa).

6 helical membrane-spanning segments follow: residues 21–41, 46–66, 89–109, 174–194, 212–232, and 256–276; these read PWPV…VSFM, FNIY…YSWW, IGMA…FASF, CVTA…MQAY, FYLA…FLIV, and AWYW…VYIF.

The protein belongs to the cytochrome c oxidase subunit 3 family.

The protein resides in the cell membrane. The enzyme catalyses 4 Fe(II)-[cytochrome c] + O2 + 8 H(+)(in) = 4 Fe(III)-[cytochrome c] + 2 H2O + 4 H(+)(out). The protein is Probable cytochrome c oxidase subunit 3 (ctaE) of Rickettsia felis (strain ATCC VR-1525 / URRWXCal2) (Rickettsia azadi).